The primary structure comprises 937 residues: C-1-tetrahydrofolate synthase, cytoplasmic (937 aa).

The segment at 1–309 is methylenetetrahydrofolate dehydrogenase and cyclohydrolase; the sequence is MALLLEGTSL…TLLPLKLQTP (309 aa). Residues 50 to 54 and 97 to 99 contribute to the substrate site; these read YVRMK and VQL. NADP(+) contacts are provided by residues 168–170 and serine 193; that span reads GRS. Position 268–272 (268–272) interacts with substrate; it reads PGSVG. Positions 310-937 are formyltetrahydrofolate synthetase; sequence VPSDIEIARS…AENGDIVGLS (628 aa). Residue 374–381 coordinates ATP; sequence TPFGEGKS.

In the N-terminal section; belongs to the tetrahydrofolate dehydrogenase/cyclohydrolase family. It in the C-terminal section; belongs to the formate--tetrahydrofolate ligase family. As to quaternary structure, homodimer.

It localises to the cytoplasm. The enzyme catalyses (6R)-5,10-methylene-5,6,7,8-tetrahydrofolate + NADP(+) = (6R)-5,10-methenyltetrahydrofolate + NADPH. It catalyses the reaction (6R)-5,10-methenyltetrahydrofolate + H2O = (6R)-10-formyltetrahydrofolate + H(+). It carries out the reaction (6S)-5,6,7,8-tetrahydrofolate + formate + ATP = (6R)-10-formyltetrahydrofolate + ADP + phosphate. Its pathway is one-carbon metabolism; tetrahydrofolate interconversion. This is C-1-tetrahydrofolate synthase, cytoplasmic from Schizosaccharomyces pombe (strain 972 / ATCC 24843) (Fission yeast).